The chain runs to 122 residues: Large ribosomal subunit protein uL14 (122 aa).

It belongs to the universal ribosomal protein uL14 family. As to quaternary structure, part of the 50S ribosomal subunit. Forms a cluster with proteins L3 and L19. In the 70S ribosome, L14 and L19 interact and together make contacts with the 16S rRNA in bridges B5 and B8.

Binds to 23S rRNA. Forms part of two intersubunit bridges in the 70S ribosome. The chain is Large ribosomal subunit protein uL14 from Finegoldia magna (strain ATCC 29328 / DSM 20472 / WAL 2508) (Peptostreptococcus magnus).